The following is a 183-amino-acid chain: MLLEETLKSCPIVKRGEYHYFIHPISDGVPVVEPKLLREVATRIIKIGDFEGATKLVTAEAMGIPLVTTLSLYTDIPYVIMRKREYKLPGEIPVFQSTGYSKGQLYLNGIEKGDKVVIIDDVISTGGTMIAIIDALKRAGAEIKDIICVIERGEGKKIVEEKTGYKIKTLVKIDVVDGKVVIL.

It belongs to the purine/pyrimidine phosphoribosyltransferase family. Archaeal HPRT subfamily. In terms of assembly, homodimer.

It is found in the cytoplasm. The enzyme catalyses IMP + diphosphate = hypoxanthine + 5-phospho-alpha-D-ribose 1-diphosphate. The catalysed reaction is GMP + diphosphate = guanine + 5-phospho-alpha-D-ribose 1-diphosphate. The protein operates within purine metabolism; IMP biosynthesis via salvage pathway; IMP from hypoxanthine: step 1/1. Catalyzes a salvage reaction resulting in the formation of IMP that is energically less costly than de novo synthesis. The chain is Hypoxanthine/guanine phosphoribosyltransferase from Methanocaldococcus jannaschii (strain ATCC 43067 / DSM 2661 / JAL-1 / JCM 10045 / NBRC 100440) (Methanococcus jannaschii).